Consider the following 255-residue polypeptide: Imidazole glycerol phosphate synthase subunit HisF (255 aa).

Active-site residues include Asp11 and Asp130.

This sequence belongs to the HisA/HisF family. Heterodimer of HisH and HisF.

The protein resides in the cytoplasm. It carries out the reaction 5-[(5-phospho-1-deoxy-D-ribulos-1-ylimino)methylamino]-1-(5-phospho-beta-D-ribosyl)imidazole-4-carboxamide + L-glutamine = D-erythro-1-(imidazol-4-yl)glycerol 3-phosphate + 5-amino-1-(5-phospho-beta-D-ribosyl)imidazole-4-carboxamide + L-glutamate + H(+). The protein operates within amino-acid biosynthesis; L-histidine biosynthesis; L-histidine from 5-phospho-alpha-D-ribose 1-diphosphate: step 5/9. Functionally, IGPS catalyzes the conversion of PRFAR and glutamine to IGP, AICAR and glutamate. The HisF subunit catalyzes the cyclization activity that produces IGP and AICAR from PRFAR using the ammonia provided by the HisH subunit. This Syntrophotalea carbinolica (strain DSM 2380 / NBRC 103641 / GraBd1) (Pelobacter carbinolicus) protein is Imidazole glycerol phosphate synthase subunit HisF.